A 237-amino-acid polypeptide reads, in one-letter code: MAKSRFEYVREYEVHDTLLPETYIVVRIDGKHFHEFSQHYSFEKPNDERALKLMNASAKNVVMAYSGDIILAFGESDEYSFILRKDSTLFRRRRDKLSTLFVSLFTAQYVALWPKFFPEQPLSHKRLPFFDSRCVCYPNTTVVKDYLCWRYVDTHINNLYNTVFWNLVLKCNLTPREAEQRLSGTLSSDKQEILFSECGVNYNNESEMFKKGSLINRKGEIMHIDVVKQIDELFAGF.

Residues D29, G30, and D77 each contribute to the Mg(2+) site. Residues 29–34 (DGKHFH) and 76–77 (SD) each bind GTP.

Belongs to the tRNA(His) guanylyltransferase family. Requires Mg(2+) as cofactor.

It carries out the reaction a 5'-end ribonucleotide-tRNA(His) + GTP + ATP + H2O = a 5'-end phospho-guanosine-ribonucleotide-tRNA(His) + AMP + 2 diphosphate + H(+). Functionally, adds a GMP to the 5'-end of tRNA(His) after transcription and RNase P cleavage. This chain is tRNA(His) guanylyltransferase (THG1), found in Eremothecium gossypii (strain ATCC 10895 / CBS 109.51 / FGSC 9923 / NRRL Y-1056) (Yeast).